Here is a 156-residue protein sequence, read N- to C-terminus: Ribosomal RNA large subunit methyltransferase H (156 aa).

Residues L73, G104, and 123–128 (LSALTL) contribute to the S-adenosyl-L-methionine site.

This sequence belongs to the RNA methyltransferase RlmH family. As to quaternary structure, homodimer.

The protein localises to the cytoplasm. The enzyme catalyses pseudouridine(1915) in 23S rRNA + S-adenosyl-L-methionine = N(3)-methylpseudouridine(1915) in 23S rRNA + S-adenosyl-L-homocysteine + H(+). Specifically methylates the pseudouridine at position 1915 (m3Psi1915) in 23S rRNA. This chain is Ribosomal RNA large subunit methyltransferase H, found in Shewanella sp. (strain MR-7).